A 354-amino-acid chain; its full sequence is Lysophosphatidic acid receptor 3 (354 aa).

At 1 to 31 (MNECHYDKRMDFFYNRSNTDTADEWTGTKLV) the chain is on the extracellular side. The N-linked (GlcNAc...) asparagine glycan is linked to Asn-15. Residues 32-52 (IVLCVGTFFCLFIFFSNSLVI) traverse the membrane as a helical segment. The Cytoplasmic portion of the chain corresponds to 53-67 (AAVITNRKFHFPFYY). Residues 68 to 88 (LLANLAAADFFAGIAYVFLMF) traverse the membrane as a helical segment. The Extracellular segment spans residues 89 to 101 (NTGPVSKTLTVNR). A helical transmembrane segment spans residues 102 to 124 (WLLRQGLLDTSLTASLANLLVIA). Over 125 to 146 (VERHMSIMRMRIHSNLTKKRVT) the chain is Cytoplasmic. A helical membrane pass occupies residues 147 to 167 (LLILLVWAIAIFMGAVPTLGW). Over 168-186 (NCLCNISACSSLAPIYSRS) the chain is Extracellular. An N-linked (GlcNAc...) asparagine glycan is attached at Asn-172. A helical transmembrane segment spans residues 187 to 207 (YLIFWTVSNLLAFFIMVVVYV). Over 208–240 (RIYMYVKRKTNVLSPHTSGSISRRRAPMKLMKT) the chain is Cytoplasmic. The chain crosses the membrane as a helical span at residues 241–261 (VMTVLGAFVVCWTPGLVVLLL). At 262 to 276 (DGLNCKQCNVQHVKR) the chain is on the extracellular side. The helical transmembrane segment at 277–295 (WFLLLALLNSVMNPIIYSY) threads the bilayer. Residues 296 to 354 (KDEDMYNTMRKMICCAPHDSNAERHPSRIPSTIHSRSDTGSQYLEDSISQGQVCNKSSS) lie on the Cytoplasmic side of the membrane. Cys-309 is lipidated: S-palmitoyl cysteine.

The protein belongs to the G-protein coupled receptor 1 family.

It localises to the cell membrane. Receptor for lysophosphatidic acid (LPA), a mediator of diverse cellular activities. Seems to be coupled to the G(i)/G(o) and G(q) families of heteromeric G proteins. The chain is Lysophosphatidic acid receptor 3 (Lpar3) from Rattus norvegicus (Rat).